We begin with the raw amino-acid sequence, 787 residues long: DNA ligase (787 aa).

NAD(+) contacts are provided by residues 32–36 (DAEYD), 81–82 (SL), and E121. K123 serves as the catalytic N6-AMP-lysine intermediate. R144, E181, K297, and K321 together coordinate NAD(+). Zn(2+) contacts are provided by C415, C418, C445, and C451. The BRCT domain maps to 703–787 (VEGLPLAGQT…RLTELGVAVD (85 aa)).

The protein belongs to the NAD-dependent DNA ligase family. LigA subfamily. The cofactor is Mg(2+). Mn(2+) serves as cofactor.

The enzyme catalyses NAD(+) + (deoxyribonucleotide)n-3'-hydroxyl + 5'-phospho-(deoxyribonucleotide)m = (deoxyribonucleotide)n+m + AMP + beta-nicotinamide D-nucleotide.. Functionally, DNA ligase that catalyzes the formation of phosphodiester linkages between 5'-phosphoryl and 3'-hydroxyl groups in double-stranded DNA using NAD as a coenzyme and as the energy source for the reaction. It is essential for DNA replication and repair of damaged DNA. The polypeptide is DNA ligase (Pseudomonas syringae pv. tomato (strain ATCC BAA-871 / DC3000)).